Reading from the N-terminus, the 90-residue chain is DNA-directed RNA polymerase subunit omega (90 aa).

Belongs to the RNA polymerase subunit omega family. In terms of assembly, the RNAP catalytic core consists of 2 alpha, 1 beta, 1 beta' and 1 omega subunit. When a sigma factor is associated with the core the holoenzyme is formed, which can initiate transcription.

It catalyses the reaction RNA(n) + a ribonucleoside 5'-triphosphate = RNA(n+1) + diphosphate. Promotes RNA polymerase assembly. Latches the N- and C-terminal regions of the beta' subunit thereby facilitating its interaction with the beta and alpha subunits. The protein is DNA-directed RNA polymerase subunit omega (rpoZ) of Streptomyces coelicolor (strain ATCC BAA-471 / A3(2) / M145).